The sequence spans 211 residues: Thymidine kinase (211 aa).

ATP contacts are provided by residues 9–16 (STMNAGKS) and 87–90 (DEAQ). Glu-88 functions as the Proton acceptor in the catalytic mechanism. Zn(2+) is bound by residues Cys-145, Cys-147, Cys-182, and His-185.

This sequence belongs to the thymidine kinase family. Homotetramer.

The protein resides in the cytoplasm. The catalysed reaction is thymidine + ATP = dTMP + ADP + H(+). The chain is Thymidine kinase from Rhodopirellula baltica (strain DSM 10527 / NCIMB 13988 / SH1).